Here is a 305-residue protein sequence, read N- to C-terminus: Olfactory receptor 9G19 (305 aa).

Residues 1–24 are Extracellular-facing; the sequence is MDQNNNTVSEFIMLGFTTDPVIQK. The helical transmembrane segment at 25–45 threads the bilayer; that stretch reads VLFAVFLVVYTLTLMGNSSLI. Residues 46–55 are Cytoplasmic-facing; the sequence is MLICNDSRLH. The helical transmembrane segment at 56-76 threads the bilayer; sequence TPMYFFIGNLSFLDLGLSSVY. The Extracellular portion of the chain corresponds to 77–96; it reads TPKILETCISEDKSISFAGC. A disulfide bond links Cys96 and Cys178. A helical transmembrane segment spans residues 97–117; the sequence is VAQFFFSAALDYTECYLLAAM. The Cytoplasmic portion of the chain corresponds to 118 to 138; that stretch reads AYDRYVAISKPLLYSQAMSLK. The helical transmembrane segment at 139–159 threads the bilayer; that stretch reads LCVCFVVASYVGGFINSVIIT. The Extracellular segment spans residues 160–204; that stretch reads KDTFALTFCNDNVIDDFFCDIPPLVKLACGKKKSFQSVLFFLLTS. Residues 205 to 225 form a helical membrane-spanning segment; that stretch reads NVIIPIVFILATYLFIIATIL. The Cytoplasmic segment spans residues 226–236; the sequence is RIRSTQGRLKA. Residues 237 to 257 form a helical membrane-spanning segment; the sequence is FSTCSSHLISVTLYYGSILYI. The Extracellular segment spans residues 258–270; the sequence is YARPRSSYSLDRD. The helical transmembrane segment at 271-291 threads the bilayer; sequence KIVSTFYTVVFPMLNPLIYSL. Residues 292-305 are Cytoplasmic-facing; it reads RNKDVKEALNKLLK.

It belongs to the G-protein coupled receptor 1 family.

Its subcellular location is the cell membrane. Odorant receptor. This chain is Olfactory receptor 9G19, found in Mus musculus (Mouse).